We begin with the raw amino-acid sequence, 691 residues long: Probable serine/threonine-protein kinase pXi (691 aa).

The region spanning 18 to 263 (YEIGSQIGNG…IDQTLKHPWI (246 aa)) is the Protein kinase domain. Residues 24–32 (IGNGKFAQV) and Lys47 contribute to the ATP site. The Proton acceptor role is filled by Asp137. 4 disordered regions span residues 314-350 (TPIK…ENEN), 420-447 (ENDS…KFTS), 510-536 (QHNN…GNGT), and 600-620 (GGSG…KKDK). Residues 322-336 (NNNNNNNNNNNNNNN) are compositionally biased toward low complexity. A compositionally biased stretch (basic and acidic residues) spans 338–350 (ILDKKSNENENEN). Composition is skewed to low complexity over residues 423-433 (SSSSETYSSSS), 512-536 (NNNI…GNGT), and 600-615 (GGSG…TGGS). Residues 642–691 (PKETMDKLASVLSNYKQKNQEKSLKVKYEKQKDKYKKLKSQLKKDKSLLK) adopt a coiled-coil conformation.

It belongs to the protein kinase superfamily. CAMK Ser/Thr protein kinase family.

The catalysed reaction is L-seryl-[protein] + ATP = O-phospho-L-seryl-[protein] + ADP + H(+). It catalyses the reaction L-threonyl-[protein] + ATP = O-phospho-L-threonyl-[protein] + ADP + H(+). This is Probable serine/threonine-protein kinase pXi (pXi) from Dictyostelium discoideum (Social amoeba).